Here is an 857-residue protein sequence, read N- to C-terminus: Alanine--tRNA ligase (857 aa).

Residues H556, H560, C658, and H662 each coordinate Zn(2+).

The protein belongs to the class-II aminoacyl-tRNA synthetase family. The cofactor is Zn(2+).

The protein localises to the cytoplasm. It carries out the reaction tRNA(Ala) + L-alanine + ATP = L-alanyl-tRNA(Ala) + AMP + diphosphate. In terms of biological role, catalyzes the attachment of alanine to tRNA(Ala) in a two-step reaction: alanine is first activated by ATP to form Ala-AMP and then transferred to the acceptor end of tRNA(Ala). Also edits incorrectly charged Ser-tRNA(Ala) and Gly-tRNA(Ala) via its editing domain. This chain is Alanine--tRNA ligase, found in Sulfurovum sp. (strain NBC37-1).